The primary structure comprises 365 residues: Peptide chain release factor 2 (365 aa).

Q252 carries the N5-methylglutamine modification.

The protein belongs to the prokaryotic/mitochondrial release factor family. Post-translationally, methylated by PrmC. Methylation increases the termination efficiency of RF2.

The protein resides in the cytoplasm. Peptide chain release factor 2 directs the termination of translation in response to the peptide chain termination codons UGA and UAA. This Escherichia coli O8 (strain IAI1) protein is Peptide chain release factor 2.